A 544-amino-acid chain; its full sequence is Chaperonin GroEL 1 (544 aa).

Residues 29 to 32 (TLGP), 86 to 90 (DGTTT), glycine 413, 479 to 481 (NAA), and aspartate 495 each bind ATP.

The protein belongs to the chaperonin (HSP60) family. In terms of assembly, forms a cylinder of 14 subunits composed of two heptameric rings stacked back-to-back. Interacts with the co-chaperonin GroES.

The protein localises to the cytoplasm. The catalysed reaction is ATP + H2O + a folded polypeptide = ADP + phosphate + an unfolded polypeptide.. In terms of biological role, together with its co-chaperonin GroES, plays an essential role in assisting protein folding. The GroEL-GroES system forms a nano-cage that allows encapsulation of the non-native substrate proteins and provides a physical environment optimized to promote and accelerate protein folding. The polypeptide is Chaperonin GroEL 1 (Synechococcus sp. (strain CC9902)).